A 234-amino-acid chain; its full sequence is Small ribosomal subunit protein uS3 (234 aa).

Residues isoleucine 39–arginine 107 form the KH type-2 domain. The segment covering glutamine 215–alanine 227 has biased composition (basic and acidic residues). Residues glutamine 215–alanine 234 form a disordered region.

The protein belongs to the universal ribosomal protein uS3 family. Part of the 30S ribosomal subunit. Forms a tight complex with proteins S10 and S14.

Its function is as follows. Binds the lower part of the 30S subunit head. Binds mRNA in the 70S ribosome, positioning it for translation. The sequence is that of Small ribosomal subunit protein uS3 from Maricaulis maris (strain MCS10) (Caulobacter maris).